Consider the following 1299-residue polypeptide: Outer capsid protein VP1 (1299 aa).

Belongs to the aquareoviridae outer capsid VP1 protein family.

Its subcellular location is the virion. The enzyme catalyses a 5'-end diphospho-ribonucleoside in mRNA + GTP + H(+) = a 5'-end (5'-triphosphoguanosine)-ribonucleoside in mRNA + diphosphate. The catalysed reaction is a 5'-end (5'-triphosphoguanosine)-ribonucleoside in mRNA + S-adenosyl-L-methionine = a 5'-end (N(7)-methyl 5'-triphosphoguanosine)-ribonucleoside in mRNA + S-adenosyl-L-homocysteine. Functionally, outer capsid protein involved in mRNA capping. Catalyzes the last 3 enzymatic activities for formation of the 5' cap structure on the viral plus-strand transcripts, namely the RNA guanylyltransferase, RNA-7N- and RNA-2'O-methyltransferase activities. This Aquareovirus C (isolate Golden shiner/USA/GSRV/1977) (AQRV-C) protein is Outer capsid protein VP1 (S1).